The primary structure comprises 519 residues: Bifunctional pantoate ligase/cytidylate kinase (519 aa).

Residues 1-282 (MNLTILRTKT…CGNTRLIDHG (282 aa)) form a pantoate--beta-alanine ligase region. Residue 30–37 (MGGLHQGH) coordinates ATP. Histidine 37 functions as the Proton donor in the catalytic mechanism. Residue glutamine 66 participates in (R)-pantoate binding. Glutamine 66 lines the beta-alanine pocket. 155-158 (GEKD) contacts ATP. Glutamine 161 contacts (R)-pantoate. An ATP-binding site is contributed by 192–195 (CSSR). The tract at residues 283 to 519 (FLMKRNPIVA…PQEVWPTNAT (237 aa)) is cytidylate kinase.

The protein in the N-terminal section; belongs to the pantothenate synthetase family. It in the C-terminal section; belongs to the cytidylate kinase family. Type 1 subfamily.

The protein resides in the cytoplasm. The enzyme catalyses (R)-pantoate + beta-alanine + ATP = (R)-pantothenate + AMP + diphosphate + H(+). It carries out the reaction CMP + ATP = CDP + ADP. The catalysed reaction is dCMP + ATP = dCDP + ADP. The protein operates within cofactor biosynthesis; (R)-pantothenate biosynthesis; (R)-pantothenate from (R)-pantoate and beta-alanine: step 1/1. Its function is as follows. Catalyzes the condensation of pantoate with beta-alanine in an ATP-dependent reaction via a pantoyl-adenylate intermediate. Functionally, catalyzes the transfer of a phosphate group from ATP to either CMP or dCMP to form CDP or dCDP and ADP, respectively. The chain is Bifunctional pantoate ligase/cytidylate kinase from Prochlorococcus marinus (strain SARG / CCMP1375 / SS120).